A 61-amino-acid polypeptide reads, in one-letter code: Sperm protamine P1 (61 aa).

Positions 1 to 61 (MARYRHSRSR…RYSRRRRRRY (61 aa)) are disordered.

It belongs to the protamine P1 family. Testis.

The protein resides in the nucleus. The protein localises to the chromosome. Its function is as follows. Protamines substitute for histones in the chromatin of sperm during the haploid phase of spermatogenesis. They compact sperm DNA into a highly condensed, stable and inactive complex. This Onychogalea fraenata (Bridled nail-tailed wallaby) protein is Sperm protamine P1 (PRM1).